Here is a 119-residue protein sequence, read N- to C-terminus: Ribonuclease P protein component (119 aa).

The protein belongs to the RnpA family. As to quaternary structure, consists of a catalytic RNA component (M1 or rnpB) and a protein subunit.

The catalysed reaction is Endonucleolytic cleavage of RNA, removing 5'-extranucleotides from tRNA precursor.. Functionally, RNaseP catalyzes the removal of the 5'-leader sequence from pre-tRNA to produce the mature 5'-terminus. It can also cleave other RNA substrates such as 4.5S RNA. The protein component plays an auxiliary but essential role in vivo by binding to the 5'-leader sequence and broadening the substrate specificity of the ribozyme. This chain is Ribonuclease P protein component, found in Listeria innocua serovar 6a (strain ATCC BAA-680 / CLIP 11262).